The sequence spans 282 residues: Bifunctional protein FolD (282 aa).

NADP(+)-binding positions include 165–167 (NRS), serine 190, and isoleucine 231.

It belongs to the tetrahydrofolate dehydrogenase/cyclohydrolase family. In terms of assembly, homodimer.

The catalysed reaction is (6R)-5,10-methylene-5,6,7,8-tetrahydrofolate + NADP(+) = (6R)-5,10-methenyltetrahydrofolate + NADPH. It carries out the reaction (6R)-5,10-methenyltetrahydrofolate + H2O = (6R)-10-formyltetrahydrofolate + H(+). It participates in one-carbon metabolism; tetrahydrofolate interconversion. Functionally, catalyzes the oxidation of 5,10-methylenetetrahydrofolate to 5,10-methenyltetrahydrofolate and then the hydrolysis of 5,10-methenyltetrahydrofolate to 10-formyltetrahydrofolate. The sequence is that of Bifunctional protein FolD from Clostridium botulinum (strain ATCC 19397 / Type A).